A 559-amino-acid chain; its full sequence is MAKLLSFSDESRSALERGVDALADAVRVTIGPRGRNVVLEKKFGAPDIVNDGDSIAREIELDDPFENLGAKLMQQVASKTKDKAGDGTTTATVLAQAMVREGLRNTAAGASPVELRRGMEKAAAHIVAGLSERSQAIAGDAIRQVATVSSGGDEEVGRMIAEAMDKVSTDGVITVEESKSLATELEITEGMAFDRGYSSPYFVTDADRQVCEFDNPLILLTDRKISTITDLVPVLETVQKSGSPLLILSEEVEGEALATLVMNKSRGVLQVAAVRAPSFGERRKAALADIAILTGGTLISEDKAMTLDKVTLEDLGKARRVTISKENTTIVANDDHRQAVSERVSAIRRELEATESDYDREKLQERIAKLAGGVAVIKVGAPTETELKNRKLRIEDALNATRAAVEEGIVAGGGSTLLQLADSLDALASSLNGDQRTGVEIVQRALTAPIHQIATNAGQNGDVVIAGMRSSGQGFNALSGVYEDLMAAGIVDAAKVVRLAVQDSISIASLLITTEVVIADKPEPPAPAPAGDGDPMGGMGGMGGMGMPGMGGMGMPGMM.

ATP is bound by residues 29–32, 86–90, Gly-413, 476–478, and Asp-492; these read TIGP, DGTTT, and NAL. Residues 521–541 form a disordered region; the sequence is KPEPPAPAPAGDGDPMGGMGG.

It belongs to the chaperonin (HSP60) family. As to quaternary structure, forms a cylinder of 14 subunits composed of two heptameric rings stacked back-to-back. Interacts with the co-chaperonin GroES.

The protein resides in the cytoplasm. It catalyses the reaction ATP + H2O + a folded polypeptide = ADP + phosphate + an unfolded polypeptide.. In terms of biological role, together with its co-chaperonin GroES, plays an essential role in assisting protein folding. The GroEL-GroES system forms a nano-cage that allows encapsulation of the non-native substrate proteins and provides a physical environment optimized to promote and accelerate protein folding. This chain is Chaperonin GroEL 1, found in Synechococcus sp. (strain CC9605).